A 247-amino-acid chain; its full sequence is Phosphoglycerate mutase 1 (247 aa).

Substrate-binding positions include 8–15 (RHGQSEWN) and 21–22 (TG). H9 serves as the catalytic Tele-phosphohistidine intermediate. S12 is modified (phosphoserine). K31 is covalently cross-linked (Glycyl lysine isopeptide (Lys-Gly) (interchain with G-Cter in ubiquitin)). Y49 is modified (phosphotyrosine). K57 participates in a covalent cross-link: Glycyl lysine isopeptide (Lys-Gly) (interchain with G-Cter in ubiquitin). Substrate is bound at residue R60. K71 is covalently cross-linked (Glycyl lysine isopeptide (Lys-Gly) (interchain with G-Cter in ubiquitin)). Residue E87 is the Proton donor/acceptor of the active site. Substrate contacts are provided by residues 87 to 90 (ERHY), K98, and 114 to 115 (RR). 3 positions are modified to phosphoserine: S116, S127, and S128. Glycyl lysine isopeptide (Lys-Gly) (interchain with G-Cter in ubiquitin) cross-links involve residues K139 and K175. 183–184 (GN) provides a ligand contact to substrate. S185 bears the Phosphoserine mark. A Glycyl lysine isopeptide (Lys-Gly) (interchain with G-Cter in ubiquitin) cross-link involves residue K191. S197 bears the Phosphoserine mark.

This sequence belongs to the phosphoglycerate mutase family. BPG-dependent PGAM subfamily. Homotetramer: dimer of dimers.

The protein localises to the cytoplasm. The protein resides in the mitochondrion outer membrane. It is found in the mitochondrion intermembrane space. The catalysed reaction is (2R)-2-phosphoglycerate = (2R)-3-phosphoglycerate. It functions in the pathway carbohydrate degradation; glycolysis; pyruvate from D-glyceraldehyde 3-phosphate: step 3/5. Its activity is regulated as follows. Inhibited by inositol hexakisphosphate and benzene tri-, tetra- and hexacarboxylates. In terms of biological role, interconversion of 3- and 2-phosphoglycerate with 2,3-bisphosphoglycerate as the primer of the reaction. Can also catalyze the reaction of EC 5.4.2.4 (synthase), but with a reduced activity. This is Phosphoglycerate mutase 1 (GPM1) from Saccharomyces cerevisiae (strain ATCC 204508 / S288c) (Baker's yeast).